Consider the following 252-residue polypeptide: Indole-3-glycerol phosphate synthase (252 aa).

It belongs to the TrpC family.

The catalysed reaction is 1-(2-carboxyphenylamino)-1-deoxy-D-ribulose 5-phosphate + H(+) = (1S,2R)-1-C-(indol-3-yl)glycerol 3-phosphate + CO2 + H2O. It functions in the pathway amino-acid biosynthesis; L-tryptophan biosynthesis; L-tryptophan from chorismate: step 4/5. This chain is Indole-3-glycerol phosphate synthase, found in Listeria monocytogenes serotype 4b (strain CLIP80459).